The following is a 579-amino-acid chain: Nif-specific regulatory protein (579 aa).

Positions 40–187 (DPVAEVPQIF…MVASLLEQAL (148 aa)) constitute a GAF domain. A Sigma-54 factor interaction domain is found at 226-454 (IVGSSPAIAE…LENCVNRAAA (229 aa)). ATP contacts are provided by residues 254-261 (GESGTGKE) and 317-326 (ADGGTLFLDE). Residues 464-536 (EELACRQGAC…PLRTKTAQLS (73 aa)) form an inter-domain linker region. Positions 468 and 473 each coordinate a divalent metal cation. Positions 502–529 (RVSAPPPEPAPAPEPAPEAPPREEVPLR) are disordered. Tandem repeats lie at residues 505–506 (AP), 507–508 (PP), 509–510 (EP), 511–512 (AP), 513–514 (AP), 515–516 (EP), and 517–518 (AP). A 7 X 2 AA tandem repeats of X-P region spans residues 505-518 (APPPEPAPAPEPAP). Pro residues predominate over residues 505-520 (APPPEPAPAPEPAPEA). Residues 537 to 579 (REELLRALESAGWVQAKAARLLGMTPRQIAYALQKFEIELRKI) are C-terminal DNA-binding domain. The segment at residues 551-570 (QAKAARLLGMTPRQIAYALQ) is a DNA-binding region (H-T-H motif).

As to quaternary structure, interacts with sigma-54.

Functionally, required for activation of most nif operons, which are directly involved in nitrogen fixation. The sequence is that of Nif-specific regulatory protein (nifA1) from Rhodobacter capsulatus (strain ATCC BAA-309 / NBRC 16581 / SB1003).